A 1226-amino-acid polypeptide reads, in one-letter code: Methionine synthase (1226 aa).

The Hcy-binding domain occupies 6–326; sequence RQQIEAQLKQ…EHIRQMAQAV (321 aa). Cys-248, Cys-311, and Cys-312 together coordinate Zn(2+). The Pterin-binding domain maps to 357–618; sequence FINVGERTNV…VPEKLREAVE (262 aa). One can recognise a B12-binding N-terminal domain in the interval 651-745; it reads SALEWRTWPV…FINAEKQSGS (95 aa). Methylcob(III)alamin is bound by residues Glu-695, 757–761, His-760, Ser-805, Thr-809, and Ala-861; that span reads GDVHD. In terms of domain architecture, B12-binding spans 747-882; the sequence is NGKILLATVK…SDERRPAFIE (136 aa). The AdoMet activation domain maps to 898 to 1226; it reads KKPRTKPVTL…EKWLGPNING (329 aa). S-adenosyl-L-methionine-binding positions include Asp-948, Arg-1136, and 1191 to 1192; that span reads YF.

This sequence belongs to the vitamin-B12 dependent methionine synthase family. The cofactor is methylcob(III)alamin. It depends on Zn(2+) as a cofactor.

It carries out the reaction (6S)-5-methyl-5,6,7,8-tetrahydrofolate + L-homocysteine = (6S)-5,6,7,8-tetrahydrofolate + L-methionine. The protein operates within amino-acid biosynthesis; L-methionine biosynthesis via de novo pathway; L-methionine from L-homocysteine (MetH route): step 1/1. Functionally, catalyzes the transfer of a methyl group from methyl-cobalamin to homocysteine, yielding enzyme-bound cob(I)alamin and methionine. Subsequently, remethylates the cofactor using methyltetrahydrofolate. In Vibrio parahaemolyticus serotype O3:K6 (strain RIMD 2210633), this protein is Methionine synthase (metH).